Here is a 263-residue protein sequence, read N- to C-terminus: Putative hydro-lyase GK2103 (263 aa).

It belongs to the D-glutamate cyclase family.

In Geobacillus kaustophilus (strain HTA426), this protein is Putative hydro-lyase GK2103.